The primary structure comprises 353 residues: MSEIFDVNAAIYPFPARPVPLDTNEKAFYREKIKTLLKQRDAVLVAHYYTDPEIQALAEETGGCVADSLEMARFGNNHPASTLLVAGVRFMGETAKILNPEKKVLMPTLNAECSLDLGCPVDEFTAFCDSHPDRTVVVYANTSAAVKAKADWVVTSSIAVELIEHLDSLGEKIIWAPDRHLGSYVQKKSGADVLCWQGACIVHDEFKTQALARMKALYPDAAVLVHPESPQAVVDMADAVGSTSQLIQAAKTLPQKTLIVATDRGIFYKMQQACPDKELFEAPTAGEGATCRSCAHCPWMAMNGLRAIAEGLEQGGVMHEIHVDEELRQQALIPLNRMLDFANQLKLQVKGNA.

Residues histidine 47 and serine 68 each coordinate iminosuccinate. Cysteine 113 provides a ligand contact to [4Fe-4S] cluster. Residues 139-141 (YAN) and serine 156 contribute to the iminosuccinate site. Cysteine 200 is a binding site for [4Fe-4S] cluster. Iminosuccinate contacts are provided by residues 226–228 (HPE) and threonine 243. [4Fe-4S] cluster is bound at residue cysteine 297.

Belongs to the quinolinate synthase family. Type 1 subfamily. Requires [4Fe-4S] cluster as cofactor.

Its subcellular location is the cytoplasm. The catalysed reaction is iminosuccinate + dihydroxyacetone phosphate = quinolinate + phosphate + 2 H2O + H(+). It functions in the pathway cofactor biosynthesis; NAD(+) biosynthesis; quinolinate from iminoaspartate: step 1/1. Functionally, catalyzes the condensation of iminoaspartate with dihydroxyacetone phosphate to form quinolinate. This Yersinia pestis bv. Antiqua (strain Antiqua) protein is Quinolinate synthase.